The primary structure comprises 209 residues: Cyclin-dependent kinase inhibitor 2 (209 aa).

The interval 1 to 32 is required for nuclear localization; sequence MAAVRRRERDVVEENGVTTTTVKRRKMEEEVD.

The protein belongs to the CDI family. ICK/KRP subfamily. As to quaternary structure, specifically interacts with CDKA-1, but not with CDKB1-1. Phosphorylated.

The protein localises to the nucleus. It is found in the nucleoplasm. Functionally, binds and inhibits CYCD2-1/CDKA-1 complex kinase activity. Regulates cell division which is crucial for plant growth, development and morphogenesis. May regulate early lateral root initiation by blocking the G1/S phase transition. Controls the mitosis-to-endocycle transition and the onset of the endoreduplication cycle during leaf development through inhibition of mitotic CDKA-1 kinase complexes. Specifically targets CDKA-1. The chain is Cyclin-dependent kinase inhibitor 2 (KRP2) from Arabidopsis thaliana (Mouse-ear cress).